A 262-amino-acid chain; its full sequence is tRNA U34 carboxymethyltransferase (262 aa).

Carboxy-S-adenosyl-L-methionine contacts are provided by residues Lys25, Trp39, Lys44, Gly63, Val114–Glu115, Tyr135, and Arg250.

Belongs to the class I-like SAM-binding methyltransferase superfamily. CmoB family. As to quaternary structure, homotetramer.

It carries out the reaction carboxy-S-adenosyl-L-methionine + 5-hydroxyuridine(34) in tRNA = 5-carboxymethoxyuridine(34) in tRNA + S-adenosyl-L-homocysteine + H(+). Catalyzes carboxymethyl transfer from carboxy-S-adenosyl-L-methionine (Cx-SAM) to 5-hydroxyuridine (ho5U) to form 5-carboxymethoxyuridine (cmo5U) at position 34 in tRNAs. In Helicobacter acinonychis (strain Sheeba), this protein is tRNA U34 carboxymethyltransferase.